A 239-amino-acid chain; its full sequence is Protein Thf1 (239 aa).

The stretch at 183–221 forms a coiled coil; sequence ERVRKDLELYRSSLDRMKQARAVVEEMVKAARRQQERRQ. Residues 211–221 are compositionally biased toward basic and acidic residues; the sequence is KAARRQQERRQ. A disordered region spans residues 211-239; that stretch reads KAARRQQERRQSAASLPETSLGDPSKPGS.

It belongs to the THF1 family.

In terms of biological role, may be involved in photosynthetic membrane biogenesis. The sequence is that of Protein Thf1 from Synechococcus sp. (strain JA-2-3B'a(2-13)) (Cyanobacteria bacterium Yellowstone B-Prime).